Consider the following 72-residue polypeptide: Translation initiation factor IF-1 (72 aa).

The S1-like domain maps to 1–72 (MAKEEAIEIE…SKGRITYRYK (72 aa)).

This sequence belongs to the IF-1 family. Component of the 30S ribosomal translation pre-initiation complex which assembles on the 30S ribosome in the order IF-2 and IF-3, IF-1 and N-formylmethionyl-tRNA(fMet); mRNA recruitment can occur at any time during PIC assembly.

The protein resides in the cytoplasm. In terms of biological role, one of the essential components for the initiation of protein synthesis. Stabilizes the binding of IF-2 and IF-3 on the 30S subunit to which N-formylmethionyl-tRNA(fMet) subsequently binds. Helps modulate mRNA selection, yielding the 30S pre-initiation complex (PIC). Upon addition of the 50S ribosomal subunit IF-1, IF-2 and IF-3 are released leaving the mature 70S translation initiation complex. The sequence is that of Translation initiation factor IF-1 from Chlorobium luteolum (strain DSM 273 / BCRC 81028 / 2530) (Pelodictyon luteolum).